A 536-amino-acid polypeptide reads, in one-letter code: Cytochrome P450 monooxygenase phqM (536 aa).

Cys-464 contacts heme.

It belongs to the cytochrome P450 family. The cofactor is heme.

It participates in alkaloid biosynthesis. Its function is as follows. Cytochrome P450 monooxygenase; part of the gene cluster that mediates the biosynthesis of paraherquamide, a fungal indole alkaloid that belongs to a family of natural products containing a characteristic bicyclo[2.2.2]diazaoctane core. The first steps in the biosynthesis of paraherquamide is the production of the beta-methyl-proline precursor from L-isoleucine. They require oxidation of a terminally hydroxylated L-isoleucine to the corresponding aldehyde by enzymes which have still to be identified. Spontaneous cyclization and dehydration would yield the 4-methyl pyrolline-5-carboxylic acid, which is then reduced by the pyrroline-5-carboxylate reductase phqD leading to the beta-methyl-proline precursor. The next step of paraherquamide biosynthesis involves coupling of beta-methyl-proline and L-tryptophan by the bimodular NRPS phqB, to produce a monooxopiperazine intermediate. The reductase (R) domain of phqB utilizes NADPH for hydride transfer to reduce the thioester bond of the T domain-tethered linear dipeptide to a hemithioaminal intermediate, which spontaneously cleaves the C-S bond to release the aldehyde product. This compound undergoes spontaneous cyclization and dehydration to give a dienamine which is reverse prenylated at C-2 by the reverse prenyltransferase phqJ. The other prenyltransferase present in the cluster, phqI may be a redundant gene in the pathway. During biosynthetic assembly, the key step to produce the polycyclic core is catalyzed by the bifunctional reductase and intramolecular [4+2] Diels-Alderase, phqE, resulting in formation of the [2.2.2] diazaoctane intermediate preparaherquamide. Following formation of preparaherquamide, an indole 2,3-epoxidation-initiated pinacol-like rearrangement is catalyzed by the phqK FAD-dependent monooxygenase. The prenyltransferase phqA, the cytochrome P450 monooxygenase phqL, and the FAD-linked oxidoreductase phqH (or the cytochrome P450 monooxygenase phqM), are proposed to be involved in the formation of the pyran ring. The FAD-dependent monooxygenase phqK is likely responsible for generation of the spiro-oxindole, and the N-methylation is likely mediated by the phqN methyltransferase leading to the isolable natural product paraherquamide F. However, the order of these biosynthetic steps has still to be determined. In late-stage paraherquamide biosynthesis, the third P450 monooxygenase, phqO, is probably responsible for the C-14 hydroxylation, transforming paraherquamide F to paraherquamide G, and paraherquamide E to the final product paraherquamide A. The expansion from the 6-membered ring pyran (in paraherquamides F and G) to the 7-membered dioxepin ring (in paraherquamides A and E) represents a poorly understood but intriguing process that probably involves the 2-oxoglutarate-dependent dioxygenase phqC. Finally, the remaining members of the paraherquamide cluster, including phqI as well as phqM (or phqH), do not have a clearly prescribed role and appear to be redundant. This is Cytochrome P450 monooxygenase phqM from Penicillium fellutanum.